A 418-amino-acid polypeptide reads, in one-letter code: Serpin A3-8 (418 aa).

Positions 1 to 25 (MRAERMSPLLALGLLVSGLCSRVHC) are cleaved as a signal peptide. 4 N-linked (GlcNAc...) asparagine glycosylation sites follow: Asn-103, Asn-183, Asn-233, and Asn-268.

This sequence belongs to the serpin family. Homodimer.

It is found in the cytoplasmic vesicle. It localises to the secretory vesicle. The protein localises to the chromaffin granule. The protein resides in the secreted. Functionally, serine protease inhibitor. The polypeptide is Serpin A3-8 (Bos taurus (Bovine)).